The following is a 447-amino-acid chain: Chordin-like protein 1 (447 aa).

An N-terminal signal peptide occupies residues 1–22 (MEGIKYIASLVFFFVFLEASKT). VWFC domains are found at residues 30–95 (TYCM…PRCP) and 108–174 (KSCE…RVCR). N-linked (GlcNAc...) asparagine glycosylation occurs at N113. A Cell attachment site motif is present at residues 174–176 (RGD). The tract at residues 199-219 (HSYLRSPYDPPPSRQAGGLPR) is disordered. The region spanning 253-318 (QVCVSNGKTY…LDGKCCKVCP (66 aa)) is the VWFC 3 domain. N286 is a glycosylation site (N-linked (GlcNAc...) asparagine).

The protein resides in the secreted. Its function is as follows. Seems to antagonize the function of BMP4 by binding to it and preventing its interaction with receptors. Alters the fate commitment of neural stem cells from gliogenesis to neurogenesis. Contributes to neuronal differentiation of neural stem cells in the brain by preventing the adoption of a glial fate. May play a crucial role in dorsoventral axis formation. May play a role in embryonic bone formation. Plays a role during anterior segment eye development. The sequence is that of Chordin-like protein 1 (Chrdl1) from Rattus norvegicus (Rat).